A 353-amino-acid chain; its full sequence is Tetrahedral aminopeptidase (353 aa).

2 residues coordinate Zn(2+): histidine 68 and aspartate 182. The active-site Proton acceptor is glutamate 212. Zn(2+) is bound by residues glutamate 213, aspartate 235, and histidine 323.

This sequence belongs to the peptidase M42 family. Homododecamer. The assembly of six dimers results in a tetrahedral-shaped structure; all 12 active sites are located on the inside of the tetrahedron. Substrate access is granted by four pores with a maximal diameter of 18 Angstroms, allowing only small peptides and unfolded proteins access to the active site. Beside the four entry ports, TET contains 12 small product release openings, which are large enough to allow passage of only single amino acid residues. Zn(2+) serves as cofactor. Requires Co(2+) as cofactor.

Its activity is regulated as follows. Inhibited by EDTA and bestatin in vitro. Is insensitive to papain, antipain, chymostatin, leupeptin, pepstatin and aprotinin. Its function is as follows. Functions as an aminopeptidase, with a clear preference for leucine as the N-terminal amino acid. However, can also cleave moderately long polypeptide substrates of various compositions in a fairly unspecific manner. Has neither carboxypeptidase nor endoproteolytic activities, and it is devoid of N-terminal deblocking activity. Is involved in protein degradation, performing degradation of oligopeptides produced by the proteasome into single amino acids. The chain is Tetrahedral aminopeptidase (frvX) from Pyrococcus horikoshii (strain ATCC 700860 / DSM 12428 / JCM 9974 / NBRC 100139 / OT-3).